A 511-amino-acid chain; its full sequence is MVGHSAQHRSKSSLVSHLLILLIFITIIIEMCLYNKIFKNQRSDDIRDNFNNGGHRVPSNVQNHGTHIRDEAFISGVYYSNWSPYKPRFHFPHDINLKQVSHIYYAFFKINSRTGGIENTDSWSDLEMNLYKSLAIKNSELIKESSNNSVQNILPLGCIGELFYLKNTCSDKKFKVIMSIGGWSDSENFKIIIKDDKLLQNFVDSSVETMFRLGFDGIDLDWEFPGNNESEPRGYLKLVRMLRLKLNSLESQIFGKRTEDHFQLSIAAPAFKDKLFYLPITEIDQYVDYWNMMTYDYYGSWSETTGYHSNLFSETELNGNFAMHYMIDRFGVNSRKLVLGMAAYGRSFHIKDNKFEPFNQNTVLINKIFKGVGKPTKEIDKADGKEGIWPYKNLPKIGTIEQYDPKYVSAYCFDEKNSIFISYDNTKSVKTKAEYVTHNNLGGGFWWESCGEAYANESRSLINAFNEGLHFNVSSKPSIFQDVRVKKYYLNKYGDGGFLSPYLKHLDSRKQ.

An N-terminal signal peptide occupies residues 1-34 (MVGHSAQHRSKSSLVSHLLILLIFITIIIEMCLY). The 400-residue stretch at 73–472 (FISGVYYSNW…NAFNEGLHFN (400 aa)) folds into the GH18 domain. Residue Asn-147 is glycosylated (N-linked (GlcNAc...) asparagine). Glu-223 acts as the Proton donor in catalysis. N-linked (GlcNAc...) asparagine glycans are attached at residues Asn-228, Asn-456, and Asn-472.

The protein belongs to the glycosyl hydrolase 18 family. Chitinase class III subfamily.

It is found in the secreted. The catalysed reaction is Random endo-hydrolysis of N-acetyl-beta-D-glucosaminide (1-&gt;4)-beta-linkages in chitin and chitodextrins.. This Saccharomyces cerevisiae (strain ATCC 204508 / S288c) (Baker's yeast) protein is Sporulation-specific chitinase 2 (CTS2).